The sequence spans 271 residues: Tryptophan synthase alpha chain (271 aa).

Catalysis depends on proton acceptor residues glutamate 49 and aspartate 60.

This sequence belongs to the TrpA family. In terms of assembly, tetramer of two alpha and two beta chains.

It catalyses the reaction (1S,2R)-1-C-(indol-3-yl)glycerol 3-phosphate + L-serine = D-glyceraldehyde 3-phosphate + L-tryptophan + H2O. The protein operates within amino-acid biosynthesis; L-tryptophan biosynthesis; L-tryptophan from chorismate: step 5/5. In terms of biological role, the alpha subunit is responsible for the aldol cleavage of indoleglycerol phosphate to indole and glyceraldehyde 3-phosphate. In Paraburkholderia phymatum (strain DSM 17167 / CIP 108236 / LMG 21445 / STM815) (Burkholderia phymatum), this protein is Tryptophan synthase alpha chain.